The primary structure comprises 264 residues: Methionine aminopeptidase (264 aa).

Residue His-79 coordinates substrate. A divalent metal cation-binding residues include Asp-97, Asp-108, and His-171. His-178 is a binding site for substrate. The a divalent metal cation site is built by Glu-204 and Glu-235.

Belongs to the peptidase M24A family. Methionine aminopeptidase type 1 subfamily. As to quaternary structure, monomer. Requires Co(2+) as cofactor. It depends on Zn(2+) as a cofactor. The cofactor is Mn(2+). Fe(2+) is required as a cofactor.

It catalyses the reaction Release of N-terminal amino acids, preferentially methionine, from peptides and arylamides.. Removes the N-terminal methionine from nascent proteins. The N-terminal methionine is often cleaved when the second residue in the primary sequence is small and uncharged (Met-Ala-, Cys, Gly, Pro, Ser, Thr, or Val). Requires deformylation of the N(alpha)-formylated initiator methionine before it can be hydrolyzed. This chain is Methionine aminopeptidase, found in Escherichia coli O157:H7.